The sequence spans 389 residues: MVTVNEIRQAQRAEGPATVFAIGTATPQNCVEQSTYPDFYFRITNSQHKTELKEKFQRMCDKSMIKKRYMHLTEEILKENPSLCEYMAPSLDARQDMVVVEVPKLGKEAATKAIKEWGQPKSKITHLIFCTTSGVDMPGADYQLTKLLGLRPYVKRYMMYQQGCFAGGTVLRLAKDLAENNKGARVLVVCSEITAVTFRGPSDTHLDSLVGQALFGDGAAAVIVGSDPLPDVEKPLFELVWTAQTIVPDSEGAIDGHLREAGLTFHLLKDVPSLVSKNIEKALVEAFQPLNISDYNSIFWIAHPGGPAILDQVEAKLGLKQRKMQATRHVLSEYGNMSSACVLFILDEMRRKSKEDGLATTGEGLEWGVLFGFGPGLTVETVLLHSMAT.

Residue Cys-164 is part of the active site.

It belongs to the thiolase-like superfamily. Chalcone/stilbene synthases family.

It carries out the reaction (E)-4-coumaroyl-CoA + 3 malonyl-CoA + 3 H(+) = 2',4,4',6'-tetrahydroxychalcone + 3 CO2 + 4 CoA. Its pathway is secondary metabolite biosynthesis; flavonoid biosynthesis. Functionally, the primary product of this enzyme is 4,2',4',6'-tetrahydroxychalcone (also termed naringenin-chalcone or chalcone) which can under specific conditions spontaneously isomerize into naringenin. The sequence is that of Chalcone synthase 1A (CHS-1A) from Pisum sativum (Garden pea).